We begin with the raw amino-acid sequence, 287 residues long: S-methyl-5'-thioadenosine phosphorylase (287 aa).

Residues T13 and 55–56 (RH) contribute to the phosphate site. A substrate-binding site is contributed by M186. T187 is a phosphate binding site. 210–212 (DYD) contacts substrate.

The protein belongs to the PNP/MTAP phosphorylase family. MTAP subfamily. As to quaternary structure, homohexamer. Dimer of a homotrimer.

It carries out the reaction S-methyl-5'-thioadenosine + phosphate = 5-(methylsulfanyl)-alpha-D-ribose 1-phosphate + adenine. It functions in the pathway amino-acid biosynthesis; L-methionine biosynthesis via salvage pathway; S-methyl-5-thio-alpha-D-ribose 1-phosphate from S-methyl-5'-thioadenosine (phosphorylase route): step 1/1. Catalyzes the reversible phosphorylation of S-methyl-5'-thioadenosine (MTA) to adenine and 5-methylthioribose-1-phosphate. Involved in the breakdown of MTA, a major by-product of polyamine biosynthesis. Responsible for the first step in the methionine salvage pathway after MTA has been generated from S-adenosylmethionine. Has broad substrate specificity with 6-aminopurine nucleosides as preferred substrates. The protein is S-methyl-5'-thioadenosine phosphorylase of Leptospira interrogans serogroup Icterohaemorrhagiae serovar copenhageni (strain Fiocruz L1-130).